We begin with the raw amino-acid sequence, 330 residues long: Virulence plasmid integrase pGP8-D (330 aa).

The Core-binding (CB) domain maps to 39 to 124; the sequence is FSLFEVIMHW…SYISLTRFLN (86 aa). The Tyr recombinase domain occupies 152–327; that stretch reads VKTDAMNSLQ…SREDNASKKM (176 aa). Catalysis depends on residues arginine 189, lysine 214, histidine 279, arginine 282, and histidine 305. Tyrosine 314 serves as the catalytic O-(3'-phospho-DNA)-tyrosine intermediate.

Belongs to the 'phage' integrase family.

The polypeptide is Virulence plasmid integrase pGP8-D (Chlamydia trachomatis serovar L2 (strain ATCC VR-902B / DSM 19102 / 434/Bu)).